The sequence spans 1694 residues: Homeobox-DDT domain protein RLT2 (1694 aa).

Residues 1-24 (MEGGSEKTTPEGCGGESKSKRKMK) are disordered. The homeobox DNA-binding region spans 17-76 (SKSKRKMKTAAQLEVLENTYSAEPYPSEAIRADLSVKLNLSDRQLQMWFCHRRLKERKST). Residues 514–573 (DENVANLLMVWRFLITFADVLGLWPFTLDEFAQAFHDYDPRLMGEIHIVLLKTIIKDIEG) form the DDT domain. The region spanning 696–765 (GTVKFAAFHV…APSTYCVRAS (70 aa)) is the HTH HARE-type domain. Acidic residues predominate over residues 795 to 816 (EDVDDAERDEDSESDVGEDPEV). Disordered regions lie at residues 795-822 (EDVD…NLKK), 1450-1541 (KQEE…ICNE), 1555-1639 (AKTS…MNMK), and 1655-1674 (EDSY…AATR). Phosphoserine occurs at positions 806 and 808. The span at 1459–1470 (GLGGVSSSGRGG) shows a compositional bias: gly residues. 2 stretches are compositionally biased toward basic residues: residues 1471–1485 (RPPR…RGNG) and 1515–1531 (GGRK…RKRP). 3 stretches are compositionally biased toward acidic residues: residues 1561–1578 (DNDD…DDGE), 1589–1605 (EDYD…DFDG), and 1624–1635 (DEYEEEEEEEED).

As to quaternary structure, interacts with CHR11. Interacts (via the DDT domain) with CHR11 (via C-terminus). As to expression, highly expressed in growing tissues such as inflorescence and flower meristems, young leaves and floral organs. Expressed in roots, rosette and cauline leaves, stems, flowers, inflorescences and siliques.

It localises to the nucleus. Transcriptional regulator required for the maintenance of the plant vegetative phase. In association with CHR11 or CHR17 may prevent the early activation of the vegetative-to-reproductive transition by regulating key genes that contribute to flower timing, such as FT, SEP1, SEP3, AGL8/FUL, SOC1 and FLC. Involved in the transcriptional regulation of seed-specific gene expression. This Arabidopsis thaliana (Mouse-ear cress) protein is Homeobox-DDT domain protein RLT2.